We begin with the raw amino-acid sequence, 270 residues long: F420 non-reducing hydrogenase II cytochrome subunit (270 aa).

5 helical membrane-spanning segments follow: residues 27–47 (AIAM…WEFM), 57–77 (MIAV…NIFS), 139–159 (ILIP…IVLY), 173–193 (WIIS…VGFL), and 195–215 (VLHL…VGIL).

This sequence belongs to the HupC/HyaC/HydC family. In terms of assembly, composed of a large subunit (VhtA), a small subunit (VhtG) and a cytochrome subunit (VhtC). It depends on heme b as a cofactor.

It localises to the cell membrane. It catalyses the reaction methanophenazine + H2 = dihydromethanophenazine. Functionally, part of the F420 non-reducing hydrogenase II complex that catalyzes the reduction of methanophenazine to dihydromethanophenazine. The chain is F420 non-reducing hydrogenase II cytochrome subunit from Methanosarcina mazei (strain ATCC BAA-159 / DSM 3647 / Goe1 / Go1 / JCM 11833 / OCM 88) (Methanosarcina frisia).